The following is a 138-amino-acid chain: Low molecular weight protein-tyrosine-phosphatase PtpB (138 aa).

Cysteine 7 serves as the catalytic Nucleophile. Arginine 13 is a catalytic residue. Residue aspartate 111 is the Proton donor of the active site.

It belongs to the low molecular weight phosphotyrosine protein phosphatase family.

It catalyses the reaction O-phospho-L-tyrosyl-[protein] + H2O = L-tyrosyl-[protein] + phosphate. In terms of biological role, dephosphorylates the phosphotyrosine-containing proteins. The sequence is that of Low molecular weight protein-tyrosine-phosphatase PtpB (ptpB) from Staphylococcus haemolyticus (strain JCSC1435).